We begin with the raw amino-acid sequence, 272 residues long: 3-methyl-2-oxobutanoate hydroxymethyltransferase (272 aa).

Residues Asp52 and Asp91 each contribute to the Mg(2+) site. 3-methyl-2-oxobutanoate-binding positions include 52–53, Asp91, and Lys121; that span reads DS. Residue Glu123 coordinates Mg(2+). Glu190 functions as the Proton acceptor in the catalytic mechanism.

The protein belongs to the PanB family. In terms of assembly, homodecamer; pentamer of dimers. Requires Mg(2+) as cofactor.

Its subcellular location is the cytoplasm. It catalyses the reaction 3-methyl-2-oxobutanoate + (6R)-5,10-methylene-5,6,7,8-tetrahydrofolate + H2O = 2-dehydropantoate + (6S)-5,6,7,8-tetrahydrofolate. It functions in the pathway cofactor biosynthesis; (R)-pantothenate biosynthesis; (R)-pantoate from 3-methyl-2-oxobutanoate: step 1/2. Its function is as follows. Catalyzes the reversible reaction in which hydroxymethyl group from 5,10-methylenetetrahydrofolate is transferred onto alpha-ketoisovalerate to form ketopantoate. In Flavobacterium johnsoniae (strain ATCC 17061 / DSM 2064 / JCM 8514 / BCRC 14874 / CCUG 350202 / NBRC 14942 / NCIMB 11054 / UW101) (Cytophaga johnsonae), this protein is 3-methyl-2-oxobutanoate hydroxymethyltransferase.